Here is a 23-residue protein sequence, read N- to C-terminus: Testis ecdysiotropin peptide B (23 aa).

Its function is as follows. Stimulates synthesis of ecdysteroid in the testes of larvae and pupae. The polypeptide is Testis ecdysiotropin peptide B (Lymantria dispar (Gypsy moth)).